Here is an 88-residue protein sequence, read N- to C-terminus: U13-theraphotoxin-Cg1a (88 aa).

An N-terminal signal peptide occupies residues 1-21 (MKVSVLITLAVLGVMFVWASA). The propeptide occupies 22-52 (AELEQSGSDQKDSDSPAWLKSMERIFQSEER). Disulfide bonds link Cys54-Cys68, Cys61-Cys73, and Cys67-Cys80.

Belongs to the neurotoxin 10 (Hwtx-1) family. 41 (Jztx-36) subfamily. Expressed by the venom gland.

The protein resides in the secreted. Its function is as follows. Probable ion channel inhibitor. In Chilobrachys guangxiensis (Chinese earth tiger tarantula), this protein is U13-theraphotoxin-Cg1a.